The following is a 178-amino-acid chain: Large ribosomal subunit protein uL6 (178 aa).

Belongs to the universal ribosomal protein uL6 family. In terms of assembly, part of the 50S ribosomal subunit.

This protein binds to the 23S rRNA, and is important in its secondary structure. It is located near the subunit interface in the base of the L7/L12 stalk, and near the tRNA binding site of the peptidyltransferase center. This Staphylococcus carnosus (strain TM300) protein is Large ribosomal subunit protein uL6.